The sequence spans 642 residues: Uromodulin (642 aa).

A signal peptide spans 1–24 (MGIPLTWMLLVMMVTSWFTLAEAS). N-linked (GlcNAc...) asparagine glycans are attached at residues asparagine 25 and asparagine 38. Residues 28–64 (EARRCSECHNNATCTVDGVVTTCSCQTGFTGDGLVCE) enclose the EGF-like 1 domain. Cystine bridges form between cysteine 32-cysteine 41, cysteine 35-cysteine 50, cysteine 52-cysteine 63, cysteine 69-cysteine 82, cysteine 77-cysteine 91, cysteine 93-cysteine 105, cysteine 111-cysteine 125, cysteine 119-cysteine 134, cysteine 136-cysteine 147, cysteine 149-cysteine 160, cysteine 154-cysteine 171, cysteine 175-cysteine 268, cysteine 196-cysteine 283, cysteine 218-cysteine 256, cysteine 224-cysteine 288, cysteine 249-cysteine 257, cysteine 298-cysteine 307, cysteine 301-cysteine 316, cysteine 318-cysteine 348, cysteine 336-cysteine 426, and cysteine 367-cysteine 390. The region spanning 65 to 106 (DMDECATPWTHNCSNSSCVNTPGSFKCSCQDGFRLTPELSCT) is the EGF-like 2; calcium-binding domain. Asparagine 76 and asparagine 79 each carry an N-linked (GlcNAc...) asparagine glycan. The region spanning 107–148 (DVDECSEQGLSNCHALATCVNTEGDYLCVCPEGFTGDGWYCE) is the EGF-like 3; calcium-binding domain. Positions 149–172 (CSPGSCEPGLDCLPQGPDGKLVCQ) are beta hairpin. The D10C stretch occupies residues 173-292 (DPCNTYETLT…CNLAYCTDPS (120 aa)). Asparagine 233 carries N-linked (GlcNAc...) asparagine glycosylation. Asparagine 276 carries an N-linked (GlcNAc...) asparagine glycan. In terms of domain architecture, EGF-like 4 spans 293-324 (SVEGTCEECRVDEDCISDNGRWRCQCKQDSNI). N-linked (GlcNAc...) asparagine glycosylation is present at asparagine 323. Residues 335-430 (ECGANDIKMS…RMNFECSYPL (96 aa)) form a ZP-N region. The region spanning 335-590 (ECGANDIKMS…PTCSGTRFRS (256 aa)) is the ZP domain. N-linked (GlcNAc...) asparagine glycosylation is found at asparagine 397 and asparagine 448. The flexible ZP-N/ZP-C linker; important for secretion and polymerization into filaments stretch occupies residues 431–454 (DMKVSLKTSLQPMVSALNISLGGT). An internal hydrophobic patch (IHP) region spans residues 455 to 465 (GKFTVRMALFQ). The tract at residues 455 to 590 (GKFTVRMALF…PTCSGTRFRS (136 aa)) is ZP-C. Intrachain disulfides connect cysteine 507/cysteine 567, cysteine 528/cysteine 583, and cysteine 572/cysteine 579. Residue asparagine 514 is glycosylated (N-linked (GlcNAc...) asparagine). Residues 587–590 (RFRS) are essential for cleavage by HPN. An external hydrophobic patch (EHP); regulates polymerization into filaments region spans residues 599–607 (VLNLGPITR). The GPI-anchor amidated alanine moiety is linked to residue alanine 618. A propeptide spans 619 to 642 (SSNLRLLSIWLLLFPSATLIFMVQ) (removed in mature form).

In terms of assembly, homodimer that then polymerizes into long filaments. The filaments can additionally assemble laterally to form a sheet. The filaments consist of a zigzag-shaped backbone with laterally protruding arms which interact with bacterial adhesin fimH. Two fimH molecules can bind to a single UMOD monomer. N-glycosylated. Post-translationally, proteolytically cleaved at a conserved C-terminal proteolytic cleavage site to generate the secreted form found in urine. This cleavage is catalyzed by HPN. In terms of tissue distribution, detected in urine (secreted form). Detected in kidney thick ascending limb epithelial cells (at protein level).

It is found in the secreted. The protein resides in the apical cell membrane. Its subcellular location is the basolateral cell membrane. The protein localises to the cell projection. It localises to the cilium membrane. Its function is as follows. Functions in biogenesis and organization of the apical membrane of epithelial cells of the thick ascending limb of Henle's loop (TALH), where it promotes formation of complex filamentous gel-like structure that may play a role in the water barrier permeability. May serve as a receptor for binding and endocytosis of cytokines (IL-1, IL-2) and TNF. Facilitates neutrophil migration across renal epithelia. Functionally, in the urine, may contribute to colloid osmotic pressure, retards passage of positively charged electrolytes and inhibits formation of liquid containing supersaturated salts and subsequent formation of salt crystals. Protects against urinary tract infections by binding to type 1 fimbriated E.coli. Binds to the bacterial adhesin fimH which mediates the stable formation of bacterial aggregates, prevents the binding of E.coli to uroplakins UPK1A and UPK1B which act as urothelial receptors for type I fimbriae, and allows for pathogen clearance through micturation. Also promotes aggregation of other bacteria including K.pneumoniae, P.aeruginosa and S.mitis and so may also protect against other uropathogens. This Mus musculus (Mouse) protein is Uromodulin (Umod).